We begin with the raw amino-acid sequence, 351 residues long: Putative [LysW]-L-2-aminoadipate/[LysW]-L-glutamate phosphate reductase (351 aa).

NADP(+) contacts are provided by residues 10–13 (SGFT) and 34–36 (SRK). C151 is a catalytic residue. N318 contributes to the NADP(+) binding site.

Belongs to the NAGSA dehydrogenase family. Type 1 subfamily. LysY sub-subfamily.

It is found in the cytoplasm. It carries out the reaction [amino-group carrier protein]-C-terminal-N-(1-carboxy-5-oxopentan-1-yl)-L-glutamine + phosphate + NADP(+) = [amino-group carrier protein]-C-terminal-N-(1-carboxy-5-phosphooxy-5-oxopentan-1-yl)-L-glutamine + NADPH + H(+). The catalysed reaction is [amino-group carrier protein]-C-terminal-gamma-(L-glutamyl-5-semialdehyde)-L-glutamate + phosphate + NADP(+) = [amino-group carrier protein]-C-terminal-gamma-(5-phospho-L-glutamyl)-L-glutamate + NADPH + H(+). The protein operates within amino-acid biosynthesis; L-lysine biosynthesis via AAA pathway; L-lysine from L-alpha-aminoadipate (Thermus route): step 3/5. Its pathway is amino-acid biosynthesis; L-arginine biosynthesis. Involved in both the arginine and lysine biosynthetic pathways. This is Putative [LysW]-L-2-aminoadipate/[LysW]-L-glutamate phosphate reductase from Pyrobaculum calidifontis (strain DSM 21063 / JCM 11548 / VA1).